The following is a 294-amino-acid chain: Phosphate acetyltransferase (294 aa).

This sequence belongs to the phosphate acetyltransferase and butyryltransferase family. Homotetramer.

It localises to the cytoplasm. The enzyme catalyses acetyl-CoA + phosphate = acetyl phosphate + CoA. Its pathway is metabolic intermediate biosynthesis; acetyl-CoA biosynthesis; acetyl-CoA from acetate: step 2/2. In terms of biological role, in addition to acetyl-CoA (100%), the enzyme accepts propionyl-CoA (60%) and butyryl-CoA (30%). The polypeptide is Phosphate acetyltransferase (pta) (Thermotoga maritima (strain ATCC 43589 / DSM 3109 / JCM 10099 / NBRC 100826 / MSB8)).